Consider the following 338-residue polypeptide: MFSHLRNRLSVNRPQALSSQIRAASTMKEAIVSRGPRVHIIDSPIPKAGPGQVVVKIEYAGSNPKDWKRPEYWGSKATMNQGDDHSGTVYEVGEGVSDFKIGDRVAAMHEGKQPGGSYAEYGVSWAYTTIHLPEQTTFQEGAAIPFAAFTAACALYAKLDLPYPRHPVSDDQKIPLVIWGASSAVGSYAVQLAKKSNIHPLICIAGRAQEHVERMIDGSKGDIVIDYRKGHEAVAQKIKANLSGQKLEYAFDAVSEMGSYQTICDVLDQEIGKITLIIPAQSYSDIPKTIKKSVTTVASVHEDLKEFARGFSTYFGRGLQDGWLKAHPQEVVPGDWRG.

65–68 is an NADP(+) binding site; it reads KDWK. 147–153 serves as a coordination point for substrate; it reads AAFTAAC. Residues 182–185, 205–208, tyrosine 227, and 277–278 each bind NADP(+); these read SSAV, AGRA, and II.

The protein belongs to the zinc-containing alcohol dehydrogenase family.

Functionally, trans-enoyl reductase; part of the gene cluster that mediates the biosynthesis of fusarubins, highly pigmented naphthoquinones responsible for the coloration of the fruiting bodies. The non-reducing polyketide synthase FSR1 is responsible for the condensation of seven acetyl-CoA units to yield a haptaketide. After rings A and B are formed by aldol-type cyclization, the PKS-derived product is released as 6-O-demethylfusarubinaldehyde. Then, two hydroxyl groups at C-5 and C-10 are incorporated by FSR3, and simultaneously hydroxyl groups at C-6 and C-8 are methylated by FSR2. The aldehyde is, on the one hand, reduced by FSR3 to 8-O-methylfusarubin alcohol, which equilibrates mainly with 8-O-methylfusarubin and only small amounts of 8-O-methylnectriafurone. On the other hand, the aldehyde can be oxidized to form 8-O-methylfusarubinic acid, a reaction driven by FSR3 equilibrating with 8-O-methylfusarubinlactone, finally resulting in 8-O-methylanhydrofusarubinlactol after a further reduction step and loss of water. 8-O-Methylfusarubinic acid can also undergo decarboxylation, resulting in 8-O-methyl-13-hydroxynorjavanicin after another hydroxylation step at C-13. Both steps are most likely also accomplished by FSR3. No enzymatic function has been determined so far for either FSR4 and FSR5. Their deletion does not alter the product spectrum, but the possibility that they catalyze specific enzymatic steps during perithecium development cannot be ruled out. FSR4 might possess a regulatory function in the biosynthesis of fusarubins. The polypeptide is Trans-enoyl reductase fsr4 (Gibberella fujikuroi (strain CBS 195.34 / IMI 58289 / NRRL A-6831) (Bakanae and foot rot disease fungus)).